The sequence spans 537 residues: Lysine--tRNA ligase (537 aa).

The short motif at 30-38 (PSGNIHIGN) is the 'HIGH' region element. A 'KMSKS' region motif is present at residues 276-280 (AMSSS).

Belongs to the class-I aminoacyl-tRNA synthetase family.

Its subcellular location is the cytoplasm. It catalyses the reaction tRNA(Lys) + L-lysine + ATP = L-lysyl-tRNA(Lys) + AMP + diphosphate. This is Lysine--tRNA ligase from Methanosarcina barkeri (strain Fusaro / DSM 804).